We begin with the raw amino-acid sequence, 98 residues long: Biogenesis of lysosome-related organelles complex 1 subunit SNN1 (98 aa).

Residues 55 to 98 (MDEQELLQEEGSLKEELARVNQLKKRLDKLTELYAELARKCGAL) adopt a coiled-coil conformation.

The protein belongs to the SNAPIN family. As to quaternary structure, component of the biogenesis of lysosome-related organelles complex-1 (BLOC-1).

The protein localises to the endosome. In terms of biological role, component of the biogenesis of lysosome-related organelles complex-1 (BLOC-1), a complex involved in endosomal cargo sorting. The chain is Biogenesis of lysosome-related organelles complex 1 subunit SNN1 (SNN1) from Eremothecium gossypii (strain ATCC 10895 / CBS 109.51 / FGSC 9923 / NRRL Y-1056) (Yeast).